Consider the following 155-residue polypeptide: Deoxyuridine 5'-triphosphate nucleotidohydrolase (155 aa).

Substrate-binding positions include 74 to 76, N87, and 91 to 93; these read RSG and TID.

It belongs to the dUTPase family. Mg(2+) is required as a cofactor.

It catalyses the reaction dUTP + H2O = dUMP + diphosphate + H(+). It participates in pyrimidine metabolism; dUMP biosynthesis; dUMP from dCTP (dUTP route): step 2/2. In terms of biological role, this enzyme is involved in nucleotide metabolism: it produces dUMP, the immediate precursor of thymidine nucleotides and it decreases the intracellular concentration of dUTP so that uracil cannot be incorporated into DNA. The sequence is that of Deoxyuridine 5'-triphosphate nucleotidohydrolase from Cereibacter sphaeroides (strain KD131 / KCTC 12085) (Rhodobacter sphaeroides).